The chain runs to 152 residues: Putative aluminum-activated malate transporter 11 (152 aa).

A run of 2 helical transmembrane segments spans residues 48 to 68 (VIHA…YFME) and 78 to 98 (AIWA…VEGL).

Belongs to the aromatic acid exporter (TC 2.A.85) family.

It is found in the membrane. Its function is as follows. Malate transporter. The chain is Putative aluminum-activated malate transporter 11 (ALMT11) from Arabidopsis thaliana (Mouse-ear cress).